The chain runs to 241 residues: ATP synthase subunit 4, mitochondrial (241 aa).

A mitochondrion-targeting transit peptide spans 1–35 (MASRLARTAVGAARLRPSVVPRVLPALSTVASPRY).

This sequence belongs to the eukaryotic ATPase B chain family. F-type ATPases have 2 components, CF(1) - the catalytic core - and CF(0) - the membrane proton channel. In yeast, the dimeric form of ATP synthase consists of 17 polypeptides: alpha, beta, gamma, delta, epsilon, 4 (B), 5 (OSCP), 6 (A), 8, 9 (C), d, E (Tim11), f, g, h, i/j and k.

The protein localises to the mitochondrion. The protein resides in the mitochondrion inner membrane. In terms of biological role, mitochondrial membrane ATP synthase (F(1)F(0) ATP synthase or Complex V) produces ATP from ADP in the presence of a proton gradient across the membrane which is generated by electron transport complexes of the respiratory chain. F-type ATPases consist of two structural domains, F(1) - containing the extramembraneous catalytic core, and F(0) - containing the membrane proton channel, linked together by a central stalk and a peripheral stalk. During catalysis, ATP synthesis in the catalytic domain of F(1) is coupled via a rotary mechanism of the central stalk subunits to proton translocation. Part of the complex F(0) domain and the peripheric stalk, which acts as a stator to hold the catalytic alpha(3)beta(3) subcomplex and subunit a/atp6 static relative to the rotary elements. The sequence is that of ATP synthase subunit 4, mitochondrial (atp-3) from Neurospora crassa (strain ATCC 24698 / 74-OR23-1A / CBS 708.71 / DSM 1257 / FGSC 987).